Here is a 488-residue protein sequence, read N- to C-terminus: Glycogen synthase (488 aa).

Residue K16 participates in ADP-alpha-D-glucose binding.

This sequence belongs to the glycosyltransferase 1 family. Bacterial/plant glycogen synthase subfamily.

The enzyme catalyses [(1-&gt;4)-alpha-D-glucosyl](n) + ADP-alpha-D-glucose = [(1-&gt;4)-alpha-D-glucosyl](n+1) + ADP + H(+). Its pathway is glycan biosynthesis; glycogen biosynthesis. Its function is as follows. Synthesizes alpha-1,4-glucan chains using ADP-glucose. In Marinobacter nauticus (strain ATCC 700491 / DSM 11845 / VT8) (Marinobacter aquaeolei), this protein is Glycogen synthase.